Consider the following 98-residue polypeptide: Cystatin-B (98 aa).

Position 1 is an N-acetylmethionine (M1). A Secondary area of contact motif is present at residues 46–50; it reads QLVAG.

The protein belongs to the cystatin family. In terms of assembly, able to form dimers stabilized by noncovalent forces.

The protein resides in the cytoplasm. Functionally, this is an intracellular thiol proteinase inhibitor. In Ovis aries (Sheep), this protein is Cystatin-B (CSTB).